The chain runs to 144 residues: Transcriptional regulator SlyA (144 aa).

Positions 2 to 135 constitute an HTH marR-type domain; it reads ESPLGSDLAR…LLHLIRKLEQ (134 aa). Positions 49–72 form a DNA-binding region, H-T-H motif; sequence QIQLAKAIGIEQPSLVRTLDQLEE.

Belongs to the SlyA family. In terms of assembly, homodimer.

Functionally, transcription regulator that can specifically activate or repress expression of target genes. This is Transcriptional regulator SlyA from Klebsiella pneumoniae (strain 342).